The primary structure comprises 154 residues: Protein Smg homolog (154 aa).

It belongs to the Smg family.

This Aromatoleum aromaticum (strain DSM 19018 / LMG 30748 / EbN1) (Azoarcus sp. (strain EbN1)) protein is Protein Smg homolog.